The following is a 441-amino-acid chain: Protein SPMIP7 (441 aa).

Testis specific. Expressed at the spermatid stage.

Functionally, essential for normal spermatogenesis. In Mus musculus (Mouse), this protein is Protein SPMIP7 (Spmip7).